The sequence spans 57 residues: UPF0391 membrane protein Smed_4051 (57 aa).

Helical transmembrane passes span 4–24 (WALI…SGIS) and 33–53 (ILFY…LAVG).

It belongs to the UPF0391 family.

Its subcellular location is the cell membrane. In Sinorhizobium medicae (strain WSM419) (Ensifer medicae), this protein is UPF0391 membrane protein Smed_4051.